The following is a 208-amino-acid chain: MHYNIILLVDGTLSLEQANQVEQKHQKLLEKATEFKSEYLGLKELAYPIKKQLSAHYYRWSFHGESNCTKEFKRAANINKQIIRELIINREKDYGYLGSVNPKKQQLSLQKLTKYNEIIASENNPDNPDAPVTSGLASVKPRLSRVEKQKERELEKWTVVHQSGNFDTVQINPYRPRIKRFLQNNQQTSQANNNQPRFQNQFKKGAKP.

2 disordered regions span residues 121 to 143 (SENNPDNPDAPVTSGLASVKPRL) and 185 to 208 (NQQTSQANNNQPRFQNQFKKGAKP). Over residues 185 to 195 (NQQTSQANNNQ) the composition is skewed to low complexity.

The protein belongs to the bacterial ribosomal protein bS6 family.

Binds together with bS18 to 16S ribosomal RNA. This chain is Small ribosomal subunit protein bS6 (rpsF), found in Mycoplasma genitalium (strain ATCC 33530 / DSM 19775 / NCTC 10195 / G37) (Mycoplasmoides genitalium).